A 281-amino-acid polypeptide reads, in one-letter code: Rhomboid protease AarA (281 aa).

7 helical membrane-spanning segments follow: residues 16–36 (FSLG…AVYF), 76–96 (MLHS…VIGI), 105–125 (FKLL…SAYW), 145–165 (IGVG…IYLI), 185–205 (QLYN…QSGV), 208–228 (AAHI…ILVP), and 233–253 (VANL…IYLY). Serine 150 functions as the Nucleophile in the catalytic mechanism. Histidine 210 functions as the Charge relay system in the catalytic mechanism.

The protein belongs to the peptidase S54 family.

The protein resides in the cell membrane. It catalyses the reaction Cleaves type-1 transmembrane domains using a catalytic dyad composed of serine and histidine that are contributed by different transmembrane domains.. In terms of biological role, rhomboid serine protease that catalyzes intramembrane proteolysis. Mediates quorum-sensing and the subsequent regulation of target genes via activation of the Tat protein export system. Catalyzes the proteolytic activation of TatA by removal of its N-terminal extension. This Providencia stuartii protein is Rhomboid protease AarA (aarA).